A 266-amino-acid chain; its full sequence is Probable matrix protein (266 aa).

Residues 158-177 (ACSAGTGGTEEGDSDTEEEP) form a disordered region. Acidic residues predominate over residues 167–177 (EEGDSDTEEEP).

The protein resides in the virion. In terms of biological role, may play a role in virion budding and release by binding the ribonucleocapsid and the host membrane. The sequence is that of Probable matrix protein from Ixodidae (hardbacked ticks).